A 201-amino-acid chain; its full sequence is Putative tRNA-binding protein YtpR (201 aa).

The region spanning 90–200 (VDLSPKFVVG…GDYEAGDAFQ (111 aa)) is the tRNA-binding domain.

In Bacillus subtilis (strain 168), this protein is Putative tRNA-binding protein YtpR (ytpR).